Consider the following 196-residue polypeptide: Chromophore lyase CpcT/CpeT (196 aa).

It belongs to the CpcT/CpeT biliprotein lyase family.

Covalently attaches a chromophore to Cys residue(s) of phycobiliproteins. This Synechocystis sp. (strain ATCC 27184 / PCC 6803 / Kazusa) protein is Chromophore lyase CpcT/CpeT.